Here is a 450-residue protein sequence, read N- to C-terminus: Phosphoglucosamine mutase (450 aa).

S100 serves as the catalytic Phosphoserine intermediate. 4 residues coordinate Mg(2+): S100, D240, D242, and D244. A Phosphoserine modification is found at S100.

It belongs to the phosphohexose mutase family. Mg(2+) serves as cofactor. In terms of processing, activated by phosphorylation.

It carries out the reaction alpha-D-glucosamine 1-phosphate = D-glucosamine 6-phosphate. Catalyzes the conversion of glucosamine-6-phosphate to glucosamine-1-phosphate. The protein is Phosphoglucosamine mutase of Desulforudis audaxviator (strain MP104C).